We begin with the raw amino-acid sequence, 420 residues long: Serine hydroxymethyltransferase (420 aa).

(6S)-5,6,7,8-tetrahydrofolate contacts are provided by residues L121 and 125-127; that span reads GHL. The residue at position 229 (K229) is an N6-(pyridoxal phosphate)lysine.

This sequence belongs to the SHMT family. In terms of assembly, homodimer. Pyridoxal 5'-phosphate is required as a cofactor.

Its subcellular location is the cytoplasm. The enzyme catalyses (6R)-5,10-methylene-5,6,7,8-tetrahydrofolate + glycine + H2O = (6S)-5,6,7,8-tetrahydrofolate + L-serine. The protein operates within one-carbon metabolism; tetrahydrofolate interconversion. Its pathway is amino-acid biosynthesis; glycine biosynthesis; glycine from L-serine: step 1/1. Functionally, catalyzes the reversible interconversion of serine and glycine with tetrahydrofolate (THF) serving as the one-carbon carrier. This reaction serves as the major source of one-carbon groups required for the biosynthesis of purines, thymidylate, methionine, and other important biomolecules. Also exhibits THF-independent aldolase activity toward beta-hydroxyamino acids, producing glycine and aldehydes, via a retro-aldol mechanism. The chain is Serine hydroxymethyltransferase from Wigglesworthia glossinidia brevipalpis.